Reading from the N-terminus, the 426-residue chain is Serine hydroxymethyltransferase (426 aa).

Residues Leu118 and 122–124 each bind (6S)-5,6,7,8-tetrahydrofolate; that span reads GHL. At Lys227 the chain carries N6-(pyridoxal phosphate)lysine.

This sequence belongs to the SHMT family. As to quaternary structure, homodimer. It depends on pyridoxal 5'-phosphate as a cofactor.

Its subcellular location is the cytoplasm. The catalysed reaction is (6R)-5,10-methylene-5,6,7,8-tetrahydrofolate + glycine + H2O = (6S)-5,6,7,8-tetrahydrofolate + L-serine. The protein operates within one-carbon metabolism; tetrahydrofolate interconversion. It participates in amino-acid biosynthesis; glycine biosynthesis; glycine from L-serine: step 1/1. Its function is as follows. Catalyzes the reversible interconversion of serine and glycine with tetrahydrofolate (THF) serving as the one-carbon carrier. This reaction serves as the major source of one-carbon groups required for the biosynthesis of purines, thymidylate, methionine, and other important biomolecules. Also exhibits THF-independent aldolase activity toward beta-hydroxyamino acids, producing glycine and aldehydes, via a retro-aldol mechanism. The polypeptide is Serine hydroxymethyltransferase (Mycobacterium leprae (strain Br4923)).